We begin with the raw amino-acid sequence, 720 residues long: Polyribonucleotide nucleotidyltransferase (720 aa).

The Mg(2+) site is built by Asp-486 and Asp-492. The KH domain occupies 553 to 612 (PRITVINVPKEKIREVIGTGGKVIREIVEFSGAKIDIEDDGTIKIASTSEESTQKAIDRI). The S1 motif domain occupies 622 to 690 (GKIYNGKVVK…DRGKVKLSMR (69 aa)). A disordered region spans residues 698–720 (EDISDKVGPKGGRGGRGEGDLAE).

The protein belongs to the polyribonucleotide nucleotidyltransferase family. It depends on Mg(2+) as a cofactor.

The protein resides in the cytoplasm. It catalyses the reaction RNA(n+1) + phosphate = RNA(n) + a ribonucleoside 5'-diphosphate. Its function is as follows. Involved in mRNA degradation. Catalyzes the phosphorolysis of single-stranded polyribonucleotides processively in the 3'- to 5'-direction. This Granulibacter bethesdensis (strain ATCC BAA-1260 / CGDNIH1) protein is Polyribonucleotide nucleotidyltransferase.